A 321-amino-acid chain; its full sequence is Mitochondrial thiamine pyrophosphate carrier 1 (321 aa).

3 Solcar repeats span residues 12–110 (GSRQ…ISQM), 121–207 (PSSA…LKPV), and 216–311 (PLGS…AMGI). The next 6 membrane-spanning stretches (helical) occupy residues 17-38 (VVVAGAAAGLVSRFVIAPLDVI), 91-107 (LLYLTYGSVQFSAYTNI), 127-147 (FISGAGAGAAATTVTYPLDLL), 182-199 (GLGAGVSQIVPYMGLFFA), 213-231 (LPLPLGSSDAVAGVVASVV), and 286-303 (GLTVSLLKAAPASAVTMW).

Belongs to the mitochondrial carrier (TC 2.A.29) family.

Its subcellular location is the mitochondrion inner membrane. Functionally, mitochondrial transporter that mediates uptake of thiamine pyrophosphate (ThPP) into mitochondria. The polypeptide is Mitochondrial thiamine pyrophosphate carrier 1 (TPC1) (Phaeosphaeria nodorum (strain SN15 / ATCC MYA-4574 / FGSC 10173) (Glume blotch fungus)).